Reading from the N-terminus, the 401-residue chain is Protein zntC (401 aa).

3 helical membrane passes run 33 to 53 (GGLI…PWFL), 61 to 81 (LVSV…GAGF), and 114 to 134 (ITIV…SGGL). The interval 141 to 247 (NHMDLSQHNH…SHKDEKDSEK (107 aa)) is disordered. The segment covering 167–184 (GDDDDDDVNEDQEEDSTK) has biased composition (acidic residues). The segment covering 200 to 209 (HNSSNSSSNG) has biased composition (low complexity). A compositionally biased stretch (basic residues) spans 212–225 (HGLKKKKKSKKEHG). Over residues 226-247 (HGHNHDHSSNGHSHKDEKDSEK) the composition is skewed to basic and acidic residues. 5 helical membrane passes run 256–276 (AWVF…GLGS), 285–305 (GLLI…GIAI), 316–336 (CIAL…GMAI), 351–371 (GIIL…ELLP), and 381–401 (KLKL…ALWV).

It belongs to the ZIP transporter (TC 2.A.5) family.

It localises to the membrane. Its function is as follows. May transport divalent cations. May participate, with dstA, in the regulation of the differentiation of stalk cells during development. This chain is Protein zntC (zntC), found in Dictyostelium discoideum (Social amoeba).